Reading from the N-terminus, the 761-residue chain is RNA-binding protein mde7 (761 aa).

3 stretches are compositionally biased toward polar residues: residues 31 to 46 (PNHS…NSLL), 58 to 83 (SRNS…TTPF), and 99 to 110 (SRNNSYLQGTAE). Disordered stretches follow at residues 31 to 110 (PNHS…GTAE) and 188 to 213 (HYFD…EASN). Residues 188–197 (HYFDDTDKSV) are compositionally biased toward basic and acidic residues. The segment covering 199–211 (SKSSSGSNSLSEA) has biased composition (low complexity). The region spanning 223 to 289 (IVGGLPDDFD…SSTNNFTIIQ (67 aa)) is the RRM 1 domain. The span at 442–466 (ESNSLSNQPNNFAQTSFDYQPNHPN) shows a compositional bias: polar residues. A disordered region spans residues 442–468 (ESNSLSNQPNNFAQTSFDYQPNHPNAI). An RRM 2 domain is found at 602 to 679 (NTIYVGNLSN…GGIRLSYSKN (78 aa)).

The sequence is that of RNA-binding protein mde7 (mde7) from Schizosaccharomyces pombe (strain 972 / ATCC 24843) (Fission yeast).